The primary structure comprises 70 residues: Basic phospholipase A2 2 (70 aa).

Residues Cys-28 and Cys-44 are joined by a disulfide bond. Residue His-47 is part of the active site. Ca(2+) is bound at residue Asp-48.

It belongs to the phospholipase A2 family. Group II subfamily. D49 sub-subfamily. Ca(2+) is required as a cofactor. In terms of tissue distribution, expressed by the venom gland.

It is found in the secreted. The enzyme catalyses a 1,2-diacyl-sn-glycero-3-phosphocholine + H2O = a 1-acyl-sn-glycero-3-phosphocholine + a fatty acid + H(+). Its function is as follows. Snake venom phospholipase A2 (PLA2) that exhibits strong myotoxicity. PLA2 catalyzes the calcium-dependent hydrolysis of the 2-acyl groups in 3-sn-phosphoglycerides. The chain is Basic phospholipase A2 2 from Trimeresurus stejnegeri (Chinese green tree viper).